The following is a 553-amino-acid chain: Glutamyl-tRNA(Gln) amidotransferase subunit B, mitochondrial (553 aa).

A mitochondrion-targeting transit peptide spans 1-18 (MAASTSGYSGVLFRLRKY).

This sequence belongs to the GatB/GatE family. GatB subfamily. In terms of assembly, subunit of the heterotrimeric GatCAB amidotransferase (AdT) complex, composed of A (qrsl1), B (gatb) and C (gatc) subunits.

The protein localises to the mitochondrion. It catalyses the reaction L-glutamyl-tRNA(Gln) + L-glutamine + ATP + H2O = L-glutaminyl-tRNA(Gln) + L-glutamate + ADP + phosphate + H(+). Its function is as follows. Allows the formation of correctly charged Gln-tRNA(Gln) through the transamidation of misacylated Glu-tRNA(Gln) in the mitochondria. The reaction takes place in the presence of glutamine and ATP through an activated gamma-phospho-Glu-tRNA(Gln). The sequence is that of Glutamyl-tRNA(Gln) amidotransferase subunit B, mitochondrial from Danio rerio (Zebrafish).